The primary structure comprises 23 residues: IWGIGCNPCVGDEVTALITRGEA.

Residue Ile-1 is modified to (3R,4R)-4,5-dihydroxyisoleucine; in form alpha-amanitin. Ile-1 carries the (3R,4S)-4-hydroxyisoleucine; in form gamma-amanitin modification. Residues 1 to 8 constitute a cross-link (cyclopeptide (Ile-Pro)); sequence IWGIGCNP. Positions 2–6 form a cross-link, 2'-cysteinyl-6'-hydroxytryptophan sulfoxide (Trp-Cys); sequence WGIGC. Pro-8 is subject to 4-hydroxyproline. A propeptide spanning residues 9-23 is cleaved from the precursor; that stretch reads CVGDEVTALITRGEA.

This sequence belongs to the MSDIN fungal toxin family. In terms of processing, processed by the macrocyclase-peptidase enzyme POPB to yield a toxic cyclic decapeptide. POPB first removes 10 residues from the N-terminus. Conformational trapping of the remaining peptide forces the enzyme to release this intermediate rather than proceed to macrocyclization. The enzyme rebinds the remaining peptide in a different conformation and catalyzes macrocyclization of the N-terminal 8 residues.

In terms of biological role, major toxin belonging to the bicyclic octapeptides amatoxins that acts by binding non-competitively to RNA polymerase II and greatly slowing the elongation of transcripts from target promoters. The chain is Alpha-amanitin proprotein from Amanita fuligineoides.